Consider the following 128-residue polypeptide: Phosphoribosyl-AMP cyclohydrolase (128 aa).

Residue Asp79 coordinates Mg(2+). Position 80 (Cys80) interacts with Zn(2+). Positions 81 and 83 each coordinate Mg(2+). Positions 97 and 104 each coordinate Zn(2+).

This sequence belongs to the PRA-CH family. As to quaternary structure, homodimer. It depends on Mg(2+) as a cofactor. Zn(2+) is required as a cofactor.

The protein localises to the cytoplasm. It carries out the reaction 1-(5-phospho-beta-D-ribosyl)-5'-AMP + H2O = 1-(5-phospho-beta-D-ribosyl)-5-[(5-phospho-beta-D-ribosylamino)methylideneamino]imidazole-4-carboxamide. Its pathway is amino-acid biosynthesis; L-histidine biosynthesis; L-histidine from 5-phospho-alpha-D-ribose 1-diphosphate: step 3/9. Catalyzes the hydrolysis of the adenine ring of phosphoribosyl-AMP. The protein is Phosphoribosyl-AMP cyclohydrolase of Saccharophagus degradans (strain 2-40 / ATCC 43961 / DSM 17024).